The chain runs to 403 residues: RILP-like protein 1 (403 aa).

Serine 7 bears the Phosphoserine mark. One can recognise an RH1 domain in the interval alanine 10 to lysine 97. Cysteine 47 bears the S-nitrosocysteine mark. A coiled-coil region spans residues glutamate 76–glutamate 265. Residues arginine 291 to leucine 356 enclose the RH2 domain. Residues glutamate 329–glutamine 348 are disordered.

Belongs to the RILPL family. In terms of assembly, interacts (when S-nitrosylated) with GAPDH. Interacts with RAB8A; interaction is dependent on the phosphorylation of 'Thr-72' of RAB8A. Interacts with RAB10 and RAB12; the interaction is dependent on the phosphorylation of 'Thr-73' of RAB10, and 'Ser-105' of RAB12. S-nitrosylation is required for the interaction with GAPDH.

It localises to the cytoplasm. The protein resides in the cytosol. The protein localises to the cytoskeleton. Its subcellular location is the microtubule organizing center. It is found in the centrosome. It localises to the centriole. The protein resides in the cilium basal body. Its function is as follows. Plays a role in the regulation of cell shape and polarity. Plays a role in cellular protein transport, including protein transport away from primary cilia. Neuroprotective protein, which acts by sequestring GAPDH in the cytosol and prevent the apoptotic function of GAPDH in the nucleus. Competes with SIAH1 for binding GAPDH. Does not regulate lysosomal morphology and distribution. Binds to RAB10 following LRRK2-mediated RAB10 phosphorylation which leads to inhibition of ciliogenesis. In Bos taurus (Bovine), this protein is RILP-like protein 1 (RILPL1).